The following is a 361-amino-acid chain: 3-dehydroquinate synthase (361 aa).

NAD(+) contacts are provided by residues Asn-41, 70–75 (DGEQYK), 104–108 (GVIGD), 128–129 (TT), Lys-141, Lys-150, 150–151 (KN), and 168–171 (CLTT). Zn(2+) contacts are provided by Glu-183, His-246, and His-263.

Belongs to the sugar phosphate cyclases superfamily. Dehydroquinate synthase family. It depends on NAD(+) as a cofactor. Co(2+) serves as cofactor. Zn(2+) is required as a cofactor.

The protein localises to the cytoplasm. The enzyme catalyses 7-phospho-2-dehydro-3-deoxy-D-arabino-heptonate = 3-dehydroquinate + phosphate. The protein operates within metabolic intermediate biosynthesis; chorismate biosynthesis; chorismate from D-erythrose 4-phosphate and phosphoenolpyruvate: step 2/7. Functionally, catalyzes the conversion of 3-deoxy-D-arabino-heptulosonate 7-phosphate (DAHP) to dehydroquinate (DHQ). The polypeptide is 3-dehydroquinate synthase (Vibrio cholerae serotype O1 (strain ATCC 39315 / El Tor Inaba N16961)).